Consider the following 618-residue polypeptide: Glucose starvation modulator protein 1 (618 aa).

The zn(2)-C6 fungal-type DNA-binding region spans cysteine 20 to cysteine 48. Residues alanine 325–lysine 353 are disordered. Positions alanine 335 to lysine 353 are enriched in basic and acidic residues. The region spanning leucine 466 to glycine 538 is the PAS domain.

This sequence belongs to the ERT1/acuK family.

Its subcellular location is the nucleus. Transcription factor which regulates nonfermentable carbon utilization. Binds specifically to 5'-CGGN(8)CGG-3' and 5'-CGGN(9)CGG-3' sequences in the promoter region. This chain is Glucose starvation modulator protein 1 (GSM1), found in Saccharomyces cerevisiae (strain JAY291) (Baker's yeast).